The sequence spans 196 residues: UMP-CMP kinase (196 aa).

13-18 (GAGKGT) contacts ATP. The residue at position 33 (Ser33) is a Phosphoserine. An NMP region spans residues 33–63 (SAGELLRDERKNPDSQYGELIEKYIKEGKIV). Arg39 serves as a coordination point for a ribonucleoside 5'-phosphate. 2 positions are modified to N6-acetyllysine: Lys43 and Lys55. 61-63 (KIV) lines the a ribonucleoside 5'-phosphate pocket. Residue Lys73 forms a Glycyl lysine isopeptide (Lys-Gly) (interchain with G-Cter in SUMO2) linkage. Residue 93 to 96 (GFPR) participates in a ribonucleoside 5'-phosphate binding. Asn100 contributes to the CMP binding site. Residue Lys106 is modified to N6-succinyllysine. The LID stretch occupies residues 133–143 (ERGKSSGRSDD). Residue Arg134 coordinates ATP. A ribonucleoside 5'-phosphate-binding residues include Arg140 and Arg151. Residue Lys179 coordinates ATP. At Ser180 the chain carries Phosphoserine.

This sequence belongs to the adenylate kinase family. UMP-CMP kinase subfamily. As to quaternary structure, monomer. It depends on Mg(2+) as a cofactor.

The protein localises to the nucleus. Its subcellular location is the cytoplasm. The catalysed reaction is CMP + ATP = CDP + ADP. It carries out the reaction dCMP + ATP = dCDP + ADP. It catalyses the reaction UMP + ATP = UDP + ADP. The enzyme catalyses a 2'-deoxyribonucleoside 5'-diphosphate + ATP = a 2'-deoxyribonucleoside 5'-triphosphate + ADP. The catalysed reaction is a ribonucleoside 5'-diphosphate + ATP = a ribonucleoside 5'-triphosphate + ADP. In terms of biological role, catalyzes the phosphorylation of pyrimidine nucleoside monophosphates at the expense of ATP. Plays an important role in de novo pyrimidine nucleotide biosynthesis. Has preference for UMP and CMP as phosphate acceptors. Also displays broad nucleoside diphosphate kinase activity. In Rattus norvegicus (Rat), this protein is UMP-CMP kinase (Cmpk1).